The following is a 930-amino-acid chain: MNKIRKFFRGSGRVLAFIFAASVIWLLFDMAALRLSFSEINAGLLKEDIIRREHTGFRVEPDQVKVLYTSIRGMGLPRNGAWGKENFRKAENHELKVEENMDQVQRKGKMQNLLGRRKAVPLWHLAHLQTLPVTIPMQKTQGRDSKPEVSSQYMMSKWMTVLESEKTPFTASRGVPLTKIAGRTETFDKKQEAPQNYNVSSDTSKQASERTLNMTISVKTDRSKQKSQTVTKLRMHFASPPILKSEEVTVIKKAEAQSKDLKHEALKALPLLKFIADMGHLKNQSTNETQLGRLPEDDAAKVAPGKKLNFSESHVVIITKEEELKTDTKEVPNSKTQTVFPKLLGGSPHKQIPRNQSKTSSSPPALKKAVSQSKPTISGGLHTARSNLTAKAPTVGYQQSHANIPENPGMHHVFRIDVTLSPRDLNAPGQFGRPVVVPPEKKKEAEQRWKEGNFNVYLSDLIPVDRAIEDTRPAGCAEQLVHNDLPTTSIIMCFVDEVWSALLRSVHSVLNRSPPHLIKEILLVDDFSTKEYLKADLDKYMSQFPKVRILRLKERHGLIRARLAGAQNATGDVLTFLDSHVECNVGWLEPLLERVYLNRKKVACPVIEVINDKDMSYMTVDNFQRGVFTWPMNFGWKTIPPDVVAKNGIKETDIIRCPVMAGGLFSIDKSYFYELGTYDPGLDVWGGENMELSFKVWMCGGEIEIIPCSRVGHIFRNDNPYSFPKDRMKTVERNLVRVAEVWLDDYRELFYGHGDHLIDQGLDVGNLTQQRELRKKLKCKSFKWYLDNVFPDLKAPVVRASGVLINMALGKCVSIENITVTLEDCDGSSQLQQFNYTWVRLIKHGEWCVAPIPEKGSLTLYHCDNRNNRLKWLHKSASAFHPELVDHIVFENYQQLLCMEGNFSQKTLKLAACNPMELQQKWKFEKYYEV.

Residues 1–12 (MNKIRKFFRGSG) lie on the Cytoplasmic side of the membrane. The chain crosses the membrane as a helical; Signal-anchor for type II membrane protein span at residues 13 to 35 (RVLAFIFAASVIWLLFDMAALRL). At 36 to 930 (SFSEINAGLL…KWKFEKYYEV (895 aa)) the chain is on the lumenal side. The disordered stretch occupies residues 190–209 (KQEAPQNYNVSSDTSKQASE). Residues 193–209 (APQNYNVSSDTSKQASE) show a composition bias toward polar residues. N-linked (GlcNAc...) asparagine glycosylation is found at N198, N213, and N283. Phosphoserine is present on S285. N-linked (GlcNAc...) asparagine glycans are attached at residues N287, N309, N355, and N387. The segment at 327-381 (DTKEVPNSKTQTVFPKLLGGSPHKQIPRNQSKTSSSPPALKKAVSQSKPTISGGL) is disordered. The span at 353 to 363 (PRNQSKTSSSP) shows a compositional bias: polar residues. Disulfide bonds link C476/C708, C699/C779, and C812/C825. A catalytic subdomain A region spans residues 485-594 (LPTTSIIMCF…VGWLEPLLER (110 aa)). Residues D526 and R555 each coordinate substrate. An N-linked (GlcNAc...) asparagine glycan is attached at N568. D578 is a Mn(2+) binding site. S579 serves as a coordination point for substrate. H580 lines the Mn(2+) pocket. The catalytic subdomain B stretch occupies residues 654–716 (IIRCPVMAGG…PCSRVGHIFR (63 aa)). Residue W685 participates in substrate binding. H713 serves as a coordination point for Mn(2+). Substrate is bound by residues R716 and Y721. N-linked (GlcNAc...) asparagine glycosylation is found at N766, N817, and N835. The Ricin B-type lectin domain occupies 794 to 925 (KAPVVRASGV…MELQQKWKFE (132 aa)). 2 disulfides stabilise this stretch: C848–C863 and C898–C913. N902 carries N-linked (GlcNAc...) asparagine glycosylation.

The protein belongs to the glycosyltransferase 2 family. GalNAc-T subfamily. As to quaternary structure, interacts with EXT2. Does not interact with EXT1, EXTL1 or EXTL3. The cofactor is Mn(2+). Expressed at low level. Not expressed before E7.5 during embryogenesis. Expressed in dental mesenchyme and tongue. Accumulates in a subset of mesenchymal cells at the ventral-most portions of the 12.5 dpc maxilla and mandible underlying the dental lamina.

It localises to the golgi apparatus membrane. The enzyme catalyses L-seryl-[protein] + UDP-N-acetyl-alpha-D-galactosamine = a 3-O-[N-acetyl-alpha-D-galactosaminyl]-L-seryl-[protein] + UDP + H(+). The catalysed reaction is L-threonyl-[protein] + UDP-N-acetyl-alpha-D-galactosamine = a 3-O-[N-acetyl-alpha-D-galactosaminyl]-L-threonyl-[protein] + UDP + H(+). It participates in protein modification; protein glycosylation. Its function is as follows. Catalyzes the initial reaction in O-linked oligosaccharide biosynthesis, the transfer of an N-acetyl-D-galactosamine residue to a serine or threonine residue on the protein receptor. Has activity toward EA2 peptide substrate, but has a weak activity toward Muc2 or Muc1b substrates. This chain is Polypeptide N-acetylgalactosaminyltransferase 5 (Galnt5), found in Mus musculus (Mouse).